The primary structure comprises 160 residues: Major pollen allergen Cor a 1 isoforms 5, 6, 11 and 16 (160 aa).

The protein belongs to the BetVI family.

This Corylus avellana (European hazel) protein is Major pollen allergen Cor a 1 isoforms 5, 6, 11 and 16.